The following is a 430-amino-acid chain: GTPase Obg (430 aa).

The Obg domain occupies 1–158; sequence MFVDQVKINV…IELQLELKVL (158 aa). The tract at residues 122–143 is disordered; sequence GGRGNMRFASPRNPAPEISENG. The 176-residue stretch at 159-334 folds into the OBG-type G domain; it reads ADVGLLGFPS…LVARTADVLE (176 aa). Residues 165 to 172, 190 to 194, 212 to 215, 282 to 285, and 315 to 317 contribute to the GTP site; these read GFPSVGKS, FTTLV, DIPG, TKMD, and SSI. S172 and T192 together coordinate Mg(2+). The 78-residue stretch at 353–430 folds into the OCT domain; that stretch reads YEFSSEKDFT…ILDFVFEFVE (78 aa).

Belongs to the TRAFAC class OBG-HflX-like GTPase superfamily. OBG GTPase family. In terms of assembly, monomer. Mg(2+) serves as cofactor.

The protein resides in the cytoplasm. Functionally, an essential GTPase which binds GTP, GDP and possibly (p)ppGpp with moderate affinity, with high nucleotide exchange rates and a fairly low GTP hydrolysis rate. Plays a role in control of the cell cycle, stress response, ribosome biogenesis and in those bacteria that undergo differentiation, in morphogenesis control. The sequence is that of GTPase Obg from Pediococcus pentosaceus (strain ATCC 25745 / CCUG 21536 / LMG 10740 / 183-1w).